The chain runs to 184 residues: Photosystem I assembly protein Ycf4 (184 aa).

The next 2 membrane-spanning stretches (helical) occupy residues 22–42 and 57–77; these read FFWA…GTSS and IIFF…LFIS.

The protein belongs to the Ycf4 family.

The protein localises to the plastid. It is found in the chloroplast thylakoid membrane. In terms of biological role, seems to be required for the assembly of the photosystem I complex. This chain is Photosystem I assembly protein Ycf4, found in Aethionema cordifolium (Lebanon stonecress).